A 125-amino-acid chain; its full sequence is Holo-[acyl-carrier-protein] synthase (125 aa).

Mg(2+) is bound by residues aspartate 8 and glutamate 57.

The protein belongs to the P-Pant transferase superfamily. AcpS family. Mg(2+) serves as cofactor.

The protein resides in the cytoplasm. The enzyme catalyses apo-[ACP] + CoA = holo-[ACP] + adenosine 3',5'-bisphosphate + H(+). Transfers the 4'-phosphopantetheine moiety from coenzyme A to a Ser of acyl-carrier-protein. The chain is Holo-[acyl-carrier-protein] synthase from Geobacter sp. (strain M21).